We begin with the raw amino-acid sequence, 249 residues long: UDP-2,3-diacylglucosamine hydrolase (249 aa).

Residues Asp-7, His-9, Asp-40, Asn-78, and His-113 each coordinate Mn(2+). 78-79 (NR) is a substrate binding site. Residues Asp-121, Ser-159, Thr-163, Lys-166, and His-194 each contribute to the substrate site. Mn(2+) contacts are provided by His-194 and His-196.

It belongs to the LpxH family. Requires Mn(2+) as cofactor.

It localises to the cell inner membrane. It carries out the reaction UDP-2-N,3-O-bis[(3R)-3-hydroxytetradecanoyl]-alpha-D-glucosamine + H2O = 2-N,3-O-bis[(3R)-3-hydroxytetradecanoyl]-alpha-D-glucosaminyl 1-phosphate + UMP + 2 H(+). The protein operates within glycolipid biosynthesis; lipid IV(A) biosynthesis; lipid IV(A) from (3R)-3-hydroxytetradecanoyl-[acyl-carrier-protein] and UDP-N-acetyl-alpha-D-glucosamine: step 4/6. Hydrolyzes the pyrophosphate bond of UDP-2,3-diacylglucosamine to yield 2,3-diacylglucosamine 1-phosphate (lipid X) and UMP by catalyzing the attack of water at the alpha-P atom. Involved in the biosynthesis of lipid A, a phosphorylated glycolipid that anchors the lipopolysaccharide to the outer membrane of the cell. The protein is UDP-2,3-diacylglucosamine hydrolase of Pseudomonas fluorescens (strain SBW25).